Here is a 90-residue protein sequence, read N- to C-terminus: Small ribosomal subunit protein bS18 (90 aa).

Belongs to the bacterial ribosomal protein bS18 family. In terms of assembly, part of the 30S ribosomal subunit. Forms a tight heterodimer with protein bS6.

Functionally, binds as a heterodimer with protein bS6 to the central domain of the 16S rRNA, where it helps stabilize the platform of the 30S subunit. This chain is Small ribosomal subunit protein bS18, found in Bordetella avium (strain 197N).